The chain runs to 308 residues: Homoserine kinase (308 aa).

94-104 (PLARGLGSSAT) provides a ligand contact to ATP.

This sequence belongs to the GHMP kinase family. Homoserine kinase subfamily.

It localises to the cytoplasm. The enzyme catalyses L-homoserine + ATP = O-phospho-L-homoserine + ADP + H(+). It participates in amino-acid biosynthesis; L-threonine biosynthesis; L-threonine from L-aspartate: step 4/5. Its function is as follows. Catalyzes the ATP-dependent phosphorylation of L-homoserine to L-homoserine phosphate. The protein is Homoserine kinase of Crocosphaera subtropica (strain ATCC 51142 / BH68) (Cyanothece sp. (strain ATCC 51142)).